The primary structure comprises 3901 residues: Nonribosomal peptide synthetase opaA (3901 aa).

The tract at residues 248 to 641 (HNAQHHPSVV…HRKDNQIKIR (394 aa)) is adenylation 1. Positions 780–854 (LPVTANEIVV…DMATRLTRIK (75 aa)) constitute a Carrier 1 domain. Serine 815 bears the O-(pantetheine 4'-phosphoryl)serine mark. Residues 891 to 1164 (DAYPCSALQE…IATVPIRINL (274 aa)) form a condensation 1 region. The interval 1328–1725 (QSHAQKTPKS…GRIGNQVKLR (398 aa)) is adenylation 2. In terms of domain architecture, Carrier 2 spans 1858–1936 (RTPLDTERDL…QIAAQAATRA (79 aa)). Serine 1895 is modified (O-(pantetheine 4'-phosphoryl)serine). Residues 1953–2261 (KLTPIQQLFF…KDARRRLTRN (309 aa)) form an epimerase region. The segment at 2403-2826 (ENLYPCAPIQ…LVSTDHKRLL (424 aa)) is condensation 2. The tract at residues 2846–3243 (QQHVRETPDA…GRKDSQIKIR (398 aa)) is adenylation 3. In terms of domain architecture, Carrier 3 spans 3375–3451 (LPSTAGEQLL…ALAARSRSKD (77 aa)). Residue serine 3412 is modified to O-(pantetheine 4'-phosphoryl)serine. Residues 3509 to 3837 (HHFSFAVEGK…EDLKTHFTLN (329 aa)) form a condensation 3 region.

The protein belongs to the NRP synthetase family.

Functionally, nonribosomal peptide synthetase; part of the gene cluster that mediates the biosynthesis of oxepinamides, derivatives of anthranilyl-containing tripeptides that share an oxepin ring and a fused pyrimidinone moiety. The nonribosomal peptide synthetase (NRPS) opaA assembles the quinazolinone core with D-Phe incorporation. The first adenylation domain (A1) of opaA loads and activates anthranilic acid whereas the second A domain (A2) is for activating of L-Phe, which is then converted to D-form by the E domain. The third A domain (A3) is responsible for L-Ile activation and the terminal condensation domain C3 for cyclization and releasing the NRPS product protuboxepin K. The cytochrome P450 monooxygenase opaB then catalyzes alone the oxepin ring formation to convert protuboxepin K into protuboxepin A. The flavoenzyme opaC installs subsequently one hydroxyl group at the oxepin ring, accompanied by double bond migration, to form 15-epi-oxepinamide E. The epimerase opaE changes the D-Phe residue back to L-form, leading to oxepinamide E, which is further methylated at the hydroxyl group at C-12 by the O-methyltransferase OpaF to yield oxepinamide F. The protein is Nonribosomal peptide synthetase opaA of Aspergillus ustus.